Reading from the N-terminus, the 422-residue chain is G2/mitotic-specific cyclin-A (422 aa).

Positions 1–29 (MSQPFALHHDGENQMQRRGKMNTRSNGLS) are disordered.

The protein belongs to the cyclin family. Cyclin AB subfamily.

Essential for the control of the cell cycle at the G2/M (mitosis) transition. Interacts with the CDC2 and CDK2 protein kinases to form MPF. G2/M cyclins accumulate steadily during G2 and are abruptly destroyed at mitosis. This is G2/mitotic-specific cyclin-A from Spisula solidissima (Atlantic surf-clam).